Consider the following 380-residue polypeptide: Lipid-A-disaccharide synthase (380 aa).

Belongs to the LpxB family.

The catalysed reaction is a lipid X + a UDP-2-N,3-O-bis[(3R)-3-hydroxyacyl]-alpha-D-glucosamine = a lipid A disaccharide + UDP + H(+). Its pathway is bacterial outer membrane biogenesis; LPS lipid A biosynthesis. Condensation of UDP-2,3-diacylglucosamine and 2,3-diacylglucosamine-1-phosphate to form lipid A disaccharide, a precursor of lipid A, a phosphorylated glycolipid that anchors the lipopolysaccharide to the outer membrane of the cell. The polypeptide is Lipid-A-disaccharide synthase (Pseudomonas savastanoi pv. phaseolicola (strain 1448A / Race 6) (Pseudomonas syringae pv. phaseolicola (strain 1448A / Race 6))).